Consider the following 136-residue polypeptide: Putative pre-16S rRNA nuclease (136 aa).

It belongs to the YqgF nuclease family.

Its subcellular location is the cytoplasm. In terms of biological role, could be a nuclease involved in processing of the 5'-end of pre-16S rRNA. This chain is Putative pre-16S rRNA nuclease, found in Francisella tularensis subsp. tularensis (strain FSC 198).